The primary structure comprises 137 residues: Ribosome-binding factor A (137 aa).

This sequence belongs to the RbfA family. Monomer. Binds 30S ribosomal subunits, but not 50S ribosomal subunits or 70S ribosomes.

It is found in the cytoplasm. Its function is as follows. One of several proteins that assist in the late maturation steps of the functional core of the 30S ribosomal subunit. Associates with free 30S ribosomal subunits (but not with 30S subunits that are part of 70S ribosomes or polysomes). Required for efficient processing of 16S rRNA. May interact with the 5'-terminal helix region of 16S rRNA. This Rhodopseudomonas palustris (strain BisB18) protein is Ribosome-binding factor A.